The following is a 494-amino-acid chain: ATP synthase subunit beta (494 aa).

177 to 184 (GGAGVGKT) is a binding site for ATP.

The protein belongs to the ATPase alpha/beta chains family. F-type ATPases have 2 components, CF(1) - the catalytic core - and CF(0) - the membrane proton channel. CF(1) has five subunits: alpha(3), beta(3), gamma(1), delta(1), epsilon(1). CF(0) has three main subunits: a(1), b(2) and c(9-12). The alpha and beta chains form an alternating ring which encloses part of the gamma chain. CF(1) is attached to CF(0) by a central stalk formed by the gamma and epsilon chains, while a peripheral stalk is formed by the delta and b chains.

Its subcellular location is the cell membrane. The enzyme catalyses ATP + H2O + 4 H(+)(in) = ADP + phosphate + 5 H(+)(out). Functionally, produces ATP from ADP in the presence of a proton gradient across the membrane. The catalytic sites are hosted primarily by the beta subunits. This Bifidobacterium adolescentis (strain ATCC 15703 / DSM 20083 / NCTC 11814 / E194a) protein is ATP synthase subunit beta.